Reading from the N-terminus, the 168-residue chain is uncharacterized protein (168 aa).

5 consecutive transmembrane segments (helical) span residues 15–33, 41–57, 73–93, 108–128, and 129–149; these read YLTVIIYRTGFVIAALAVL, LSLTFILIAATCCASSL, WIGLLFYINHYPALALGGALL, VPLLNLQPIFVACLWFSWVLN, and NLIALRIFSIISGVLLLVLAI.

The protein localises to the cell membrane. This is an uncharacterized protein from Haemophilus influenzae (strain ATCC 51907 / DSM 11121 / KW20 / Rd).